Here is a 339-residue protein sequence, read N- to C-terminus: Dual specificity protein phosphatase 12 (339 aa).

Met-1 bears the N-acetylmethionine mark. Positions 1 to 25 (MLEAQGSNHGCERQAPTASPASSAG) are disordered. The 145-residue stretch at 26–170 (HAVEVRPGLY…LKLYEAMGYE (145 aa)) folds into the Tyrosine-protein phosphatase domain. Residue Cys-114 is the Phosphocysteine intermediate of the active site. 115–120 (HAGVSR) provides a ligand contact to substrate. The residue at position 334 (Ser-334) is a Phosphoserine.

The protein belongs to the protein-tyrosine phosphatase family. Non-receptor class dual specificity subfamily. In terms of assembly, monomer. The cofactor is Zn(2+).

It localises to the nucleus. Its subcellular location is the cytoplasm. It is found in the cytosol. The catalysed reaction is O-phospho-L-tyrosyl-[protein] + H2O = L-tyrosyl-[protein] + phosphate. The enzyme catalyses O-phospho-L-seryl-[protein] + H2O = L-seryl-[protein] + phosphate. It carries out the reaction O-phospho-L-threonyl-[protein] + H2O = L-threonyl-[protein] + phosphate. Its function is as follows. Dual specificity phosphatase; can dephosphorylate both phosphotyrosine and phosphoserine or phosphothreonine residues. Can dephosphorylate glucokinase (in vitro). Has phosphatase activity with the synthetic substrate 6,8-difluoro-4-methylumbelliferyl phosphate and other in vitro substrates. The sequence is that of Dual specificity protein phosphatase 12 (Dusp12) from Mus musculus (Mouse).